Here is a 618-residue protein sequence, read N- to C-terminus: Polyamine transporter TPO5 (618 aa).

The Cytoplasmic portion of the chain corresponds to 1 to 60; it reads MPEYTLLADNIRENIVHFDPNGLFDNLHTIVHEDDSQENEEAEHFNYDQVLDKSLLSRGS. Residues 61–84 traverse the membrane as a helical segment; it reads IVGLGLGLMSPVLGMCTSMAIGLI. The Extracellular portion of the chain corresponds to 85 to 90; the sequence is NGGPLT. Residues 91–110 form a helical membrane-spanning segment; the sequence is IMLGFLISGVCIWFSSLSLG. The Cytoplasmic segment spans residues 111 to 131; sequence EIVSKFPMELHVGSAMLAPEK. Residues 132 to 148 traverse the membrane as a helical segment; it reads LKLVCSWYTGWLMLIGN. Over 149–154 the chain is Extracellular; it reads WTMSTS. Residues 155–171 form a helical membrane-spanning segment; that stretch reads ITFAGAQLTISLILMTN. At 172-179 the chain is on the cytoplasmic side; it reads SNLISEAH. The chain crosses the membrane as a helical span at residues 180 to 200; that stretch reads LIFYTVIVFYLVVTVVGLVNL. The Extracellular portion of the chain corresponds to 201-211; it reads KFARFIETINK. Residues 212–231 traverse the membrane as a helical segment; sequence VCVYWIIYAIIFIDILLLVF. The Cytoplasmic portion of the chain corresponds to 232–297; sequence HKGKFRSLKY…EKDIPRGMSN (66 aa). A helical transmembrane segment spans residues 298–317; that stretch reads AVLLSAFSGVIFLIPIMLIL. Residues 318-342 are Extracellular-facing; it reads PDNDLLFTNHKVLPIVNIFTKSTDS. A helical transmembrane segment spans residues 343–367; that stretch reads VVLSFFLVLLILGNLLFSGIGSITT. At 368–402 the chain is on the cytoplasmic side; sequence SSRAVYSFSRDQAIPYYDKWTYVEPDSQSKVPKNS. Residues 403–419 traverse the membrane as a helical segment; sequence VVLSMIISYFLGLLALI. The Extracellular portion of the chain corresponds to 420-425; that stretch reads STAAFN. The chain crosses the membrane as a helical span at residues 426 to 449; that stretch reads AFIGAAVLCLCSATFIPLVLVLFT. Topologically, residues 450-464 are cytoplasmic; that stretch reads RRRAIRSAPVKIRYK. A helical membrane pass occupies residues 465-486; that stretch reads FGWFINIVSIVWLLLSMVSVCL. Topologically, residues 487 to 498 are extracellular; the sequence is PTQVPVTFKTMN. Residues 499–516 form a helical membrane-spanning segment; it reads YALMVYVFCILVITGLYF. At 517-618 the chain is on the cytoplasmic side; the sequence is KWGKYNFRLP…DLADDRRYDI (102 aa). Ser-569 carries the post-translational modification Phosphoserine. The interval 576–618 is disordered; it reads VHPKSSTENPFEENEENVITDYGDEHHTAEQEFDLADDRRYDI. The segment covering 598–618 has biased composition (basic and acidic residues); it reads GDEHHTAEQEFDLADDRRYDI.

It belongs to the amino acid-polyamine-organocation (APC) superfamily.

It localises to the golgi apparatus membrane. Functionally, required for polyamine transport. Transports putrescine effectively and spermidine less effectively. This is Polyamine transporter TPO5 (TPO5) from Saccharomyces cerevisiae (strain ATCC 204508 / S288c) (Baker's yeast).